Consider the following 173-residue polypeptide: Probable DNA-directed RNA polymerase subunit delta (173 aa).

An HTH HARE-type domain is found at 14–81; that stretch reads LSMIELGVKI…GSGMWGLKRW (68 aa). Residues 86–173 are disordered; sequence QAEEEITEEP…EDENDDDNTR (88 aa). The span at 109 to 173 shows a compositional bias: acidic residues; sequence IDDVDDDLDV…EDENDDDNTR (65 aa).

This sequence belongs to the RpoE family. In terms of assembly, RNAP is composed of a core of 2 alpha, a beta and a beta' subunits. The core is associated with a delta subunit and one of several sigma factors.

Participates in both the initiation and recycling phases of transcription. In the presence of the delta subunit, RNAP displays an increased specificity of transcription, a decreased affinity for nucleic acids, and an increased efficiency of RNA synthesis because of enhanced recycling. The chain is Probable DNA-directed RNA polymerase subunit delta from Oceanobacillus iheyensis (strain DSM 14371 / CIP 107618 / JCM 11309 / KCTC 3954 / HTE831).